The sequence spans 287 residues: Nucleotide-binding protein VP2673 (287 aa).

8 to 15 (GHSGAGKS) serves as a coordination point for ATP. Residue 56–59 (DIRN) coordinates GTP.

This sequence belongs to the RapZ-like family.

Its function is as follows. Displays ATPase and GTPase activities. This is Nucleotide-binding protein VP2673 from Vibrio parahaemolyticus serotype O3:K6 (strain RIMD 2210633).